A 143-amino-acid chain; its full sequence is Photosystem I reaction center subunit IV A, chloroplastic (143 aa).

The N-terminal 44 residues, 1-44 (MAMTTASTVFVLPANVTSVAGASSSRSSVSFLPMRNAGSRLVVR), are a transit peptide targeting the chloroplast. Residues 43–85 (VRAAEDPAPASSSSKDSPAAAAAPDGATATKPKPPPIGPKRGS) are disordered. Residues 48–73 (DPAPASSSSKDSPAAAAAPDGATATK) show a composition bias toward low complexity.

Belongs to the PsaE family. Post-translationally, 2 isoforms may exist. With or without the N-terminal alanine.

It is found in the plastid. Its subcellular location is the chloroplast thylakoid membrane. In terms of biological role, stabilizes the interaction between PsaC and the PSI core, assists the docking of the ferredoxin to PSI and interacts with ferredoxin-NADP oxidoreductase. This Arabidopsis thaliana (Mouse-ear cress) protein is Photosystem I reaction center subunit IV A, chloroplastic (PSAE1).